The following is a 279-amino-acid chain: Undecaprenyl-diphosphatase (279 aa).

7 helical membrane-spanning segments follow: residues 10–30 (FICF…FLPI), 48–68 (LGVS…IYYF), 96–116 (LFIY…LIKL), 128–148 (GLFS…LSEI), 203–223 (SFLV…FSLF), 229–249 (IDII…IFAI), and 259–279 (NNTL…LTTL).

The protein belongs to the UppP family.

Its subcellular location is the cell inner membrane. It catalyses the reaction di-trans,octa-cis-undecaprenyl diphosphate + H2O = di-trans,octa-cis-undecaprenyl phosphate + phosphate + H(+). Catalyzes the dephosphorylation of undecaprenyl diphosphate (UPP). Confers resistance to bacitracin. The sequence is that of Undecaprenyl-diphosphatase from Prochlorococcus marinus (strain NATL1A).